The primary structure comprises 365 residues: Bifunctional chorismate mutase/prephenate dehydratase (365 aa).

In terms of domain architecture, Chorismate mutase spans Met1–Arg96. Residues Arg11, Arg28, Lys39, and Glu57 each contribute to the substrate site. Positions Val97–Ser272 constitute a Prephenate dehydratase domain. In terms of domain architecture, ACT spans Ser284–Pro361.

It localises to the cytoplasm. The catalysed reaction is chorismate = prephenate. It catalyses the reaction prephenate + H(+) = 3-phenylpyruvate + CO2 + H2O. It functions in the pathway amino-acid biosynthesis; L-phenylalanine biosynthesis; phenylpyruvate from prephenate: step 1/1. It participates in metabolic intermediate biosynthesis; prephenate biosynthesis; prephenate from chorismate: step 1/1. In terms of biological role, catalyzes the Claisen rearrangement of chorismate to prephenate and the decarboxylation/dehydration of prephenate to phenylpyruvate. The sequence is that of Bifunctional chorismate mutase/prephenate dehydratase from Stutzerimonas stutzeri (Pseudomonas stutzeri).